The primary structure comprises 88 residues: Small ribosomal subunit protein uS17 (88 aa).

The protein belongs to the universal ribosomal protein uS17 family. Part of the 30S ribosomal subunit.

In terms of biological role, one of the primary rRNA binding proteins, it binds specifically to the 5'-end of 16S ribosomal RNA. The sequence is that of Small ribosomal subunit protein uS17 from Marinobacter nauticus (strain ATCC 700491 / DSM 11845 / VT8) (Marinobacter aquaeolei).